The following is a 256-amino-acid chain: DNA repair protein RecO (256 aa).

This sequence belongs to the RecO family.

Its function is as follows. Involved in DNA repair and RecF pathway recombination. This Delftia acidovorans (strain DSM 14801 / SPH-1) protein is DNA repair protein RecO.